The sequence spans 154 residues: Protein X (154 aa).

The mitochondrial targeting sequence stretch occupies residues 68–117; sequence PCALRFTSARRMETTVNAPWNLPTTLHKRTLGLSPRSTTWIEEYIKDCVF.

Belongs to the orthohepadnavirus protein X family. As to quaternary structure, may form homodimer. May interact with host CEBPA, CFLAR, CREB1, DDB1, E4F1, HBXIP, HSPD1/HSP60, NFKBIA, POLR2E and SMAD4. Interacts with host SMC5-SMC6 complex and induces its degradation. Interacts with host TRPC4AP; leading to prevent ubiquitination of TRPC4AP. Interacts with host PLSCR1; this interaction promotes ubiquitination and degradation of HBx and impairs HBx-mediated cell proliferation. A fraction may be phosphorylated in insect cells and HepG2 cells, a human hepatoblastoma cell line. Phosphorylated in vitro by host protein kinase C or mitogen-activated protein kinase. N-acetylated in insect cells.

It is found in the host cytoplasm. The protein resides in the host nucleus. The protein localises to the host mitochondrion. In terms of biological role, multifunctional protein that plays a role in silencing host antiviral defenses and promoting viral transcription. Does not seem to be essential for HBV infection. May be directly involved in development of cirrhosis and liver cancer (hepatocellular carcinoma). Most of cytosolic activities involve modulation of cytosolic calcium. The effect on apoptosis is controversial depending on the cell types in which the studies have been conducted. May induce apoptosis by localizing in mitochondria and causing loss of mitochondrial membrane potential. May also modulate apoptosis by binding host CFLAR, a key regulator of the death-inducing signaling complex (DISC). Promotes viral transcription by using the host E3 ubiquitin ligase DDB1 to target the SMC5-SMC6 complex to proteasomal degradation. This host complex would otherwise bind to viral episomal DNA, and prevents its transcription. Moderately stimulates transcription of many different viral and cellular transcription elements. Promoters and enhancers stimulated by HBx contain DNA binding sites for NF-kappa-B, AP-1, AP-2, c-EBP, ATF/CREB, or the calcium-activated factor NF-AT. The chain is Protein X from Homo sapiens (Human).